Here is a 181-residue protein sequence, read N- to C-terminus: Oligoribonuclease (181 aa).

Residues 8-171 form the Exonuclease domain; sequence LIWLDLEMTG…DDIKDSIMEL (164 aa). Tyr-129 is an active-site residue.

This sequence belongs to the oligoribonuclease family.

The protein localises to the cytoplasm. Its function is as follows. 3'-to-5' exoribonuclease specific for small oligoribonucleotides. This is Oligoribonuclease from Pseudoalteromonas translucida (strain TAC 125).